Reading from the N-terminus, the 226-residue chain is LIM domain-containing protein PLIM2a (226 aa).

2 LIM zinc-binding domains span residues 8 to 68 (DKCK…LFKE) and 104 to 164 (DKCA…LFLE). Positions 173–226 (QAAANHRRSASSGGASPPSDDHKPDDTASIPEAKEDDAAPEAAGEEEPEPVVES) are disordered. Over residues 191–209 (SDDHKPDDTASIPEAKEDD) the composition is skewed to basic and acidic residues. Residues 210 to 226 (AAPEAAGEEEPEPVVES) show a composition bias toward acidic residues.

Interacts with F-actin. In terms of tissue distribution, predominantly expressed in flowers, in the tapetum and in pollen grains. Detected in leaves and stems.

The protein resides in the cytoplasm. It localises to the cytoskeleton. Its function is as follows. Binds to actin filaments and promotes cross-linking into thick bundles. Has an actin-stabilizing activity. The actin regulatory activities are inhibited by pH &gt; 6.8 but are [Ca(2+)] independent. The polypeptide is LIM domain-containing protein PLIM2a (Arabidopsis thaliana (Mouse-ear cress)).